We begin with the raw amino-acid sequence, 737 residues long: Protein OPG064 (737 aa).

The residue at position 1 (Met-1) is an N-acetylmethionine; by host. Cys-496 and Cys-535 form a disulfide bridge.

Belongs to the orthopoxvirus OPG064 family. Interacts with host KLC2; this interaction promotes IEV trafficking by engaging the host kinesin-1 complex. Interacts with protein OPG056. In terms of processing, N-acetylated on initiator methionine by host.

Its function is as follows. Plays a role in intracellular enveloped virus (IEV) transport to the cell surface on microtubules. Together with protein OPG056, forms a complex that interacts with host KLC2 (kinesin light chain isoform 2) to engage the kinesin-1 complex and thereby promote IEV trafficking. The polypeptide is Protein OPG064 (OPG064) (Monkeypox virus).